The sequence spans 361 residues: Chorismate synthase (361 aa).

NADP(+) contacts are provided by Arg48 and Arg54. FMN contacts are provided by residues 131–133, 243–244, Gly287, 302–306, and Arg328; these read RSS, NA, and KPTSS.

It belongs to the chorismate synthase family. Homotetramer. The cofactor is FMNH2.

It catalyses the reaction 5-O-(1-carboxyvinyl)-3-phosphoshikimate = chorismate + phosphate. It participates in metabolic intermediate biosynthesis; chorismate biosynthesis; chorismate from D-erythrose 4-phosphate and phosphoenolpyruvate: step 7/7. Functionally, catalyzes the anti-1,4-elimination of the C-3 phosphate and the C-6 proR hydrogen from 5-enolpyruvylshikimate-3-phosphate (EPSP) to yield chorismate, which is the branch point compound that serves as the starting substrate for the three terminal pathways of aromatic amino acid biosynthesis. This reaction introduces a second double bond into the aromatic ring system. The sequence is that of Chorismate synthase from Rhodopseudomonas palustris (strain HaA2).